A 259-amino-acid polypeptide reads, in one-letter code: Phosphatidylglycerol--prolipoprotein diacylglyceryl transferase (259 aa).

The next 4 membrane-spanning stretches (helical) occupy residues 12-32 (LAIHWYALCILSGLVLAVYLA), 41-61 (ISSDAIFDFILIAFPLAIVGA), 80-100 (IIAIWNGGIAIYGGLITGALV), and 109-129 (VLNPIHFLDIAAPSVMVAQAI). Arg-131 contributes to the a 1,2-diacyl-sn-glycero-3-phospho-(1'-sn-glycerol) binding site. 3 helical membrane passes run 167–187 (IPTFLYESLWNLLGFVIIMMW), 194–214 (LLDGEIFAFYLIWYGSGRLVI), and 226–246 (GIRISQYVSALLIIIGLIFVI).

Belongs to the Lgt family.

The protein localises to the cell membrane. It carries out the reaction L-cysteinyl-[prolipoprotein] + a 1,2-diacyl-sn-glycero-3-phospho-(1'-sn-glycerol) = an S-1,2-diacyl-sn-glyceryl-L-cysteinyl-[prolipoprotein] + sn-glycerol 1-phosphate + H(+). It functions in the pathway protein modification; lipoprotein biosynthesis (diacylglyceryl transfer). Its function is as follows. Catalyzes the transfer of the diacylglyceryl group from phosphatidylglycerol to the sulfhydryl group of the N-terminal cysteine of a prolipoprotein, the first step in the formation of mature lipoproteins. The sequence is that of Phosphatidylglycerol--prolipoprotein diacylglyceryl transferase from Streptococcus pyogenes serotype M49 (strain NZ131).